Reading from the N-terminus, the 512-residue chain is Maturase K (512 aa).

It belongs to the intron maturase 2 family. MatK subfamily.

Its subcellular location is the plastid. It localises to the chloroplast. In terms of biological role, usually encoded in the trnK tRNA gene intron. Probably assists in splicing its own and other chloroplast group II introns. The protein is Maturase K of Lilium canadense (Canada lily).